Reading from the N-terminus, the 296-residue chain is uncharacterized protein (296 aa).

The protein localises to the mitochondrion. This is an uncharacterized protein from Podospora anserina (strain S / ATCC MYA-4624 / DSM 980 / FGSC 10383) (Pleurage anserina).